The chain runs to 251 residues: Isopentenyl-diphosphate delta-isomerase (251 aa).

Lysine 49 provides a ligand contact to substrate. Mg(2+) contacts are provided by histidine 53 and histidine 66. Residues 64-212 (LLHRAFSVFL…SNSFTPWFKL (149 aa)) enclose the Nudix hydrolase domain. Substrate-binding residues include arginine 86 and lysine 90. Cysteine 102 is a catalytic residue. Serine 103 serves as a coordination point for substrate. Positions 162 and 164 each coordinate Mg(2+). Residue glutamate 164 is part of the active site.

The protein belongs to the IPP isomerase type 1 family. Requires Mg(2+) as cofactor.

It is found in the cytoplasm. The enzyme catalyses isopentenyl diphosphate = dimethylallyl diphosphate. Its pathway is isoprenoid biosynthesis; dimethylallyl diphosphate biosynthesis; dimethylallyl diphosphate from isopentenyl diphosphate: step 1/1. Functionally, isopentenyl-diphosphate delta-isomerase; part of the second module of ergosterol biosynthesis pathway that includes the middle steps of the pathway. The second module is carried out in the vacuole and involves the formation of farnesyl diphosphate, which is also an important intermediate in the biosynthesis of ubiquinone, dolichol, heme and prenylated proteins. Activity by the mevalonate kinase first converts mevalonate into 5-phosphomevalonate. 5-phosphomevalonate is then further converted to 5-diphosphomevalonate by the phosphomevalonate kinase. The diphosphomevalonate decarboxylase then produces isopentenyl diphosphate. The isopentenyl-diphosphate delta-isomerase then catalyzes the 1,3-allylic rearrangement of the homoallylic substrate isopentenyl (IPP) to its highly electrophilic allylic isomer, dimethylallyl diphosphate (DMAPP). Finally the farnesyl diphosphate synthase catalyzes the sequential condensation of isopentenyl pyrophosphate with dimethylallyl pyrophosphate, and then with the resultant geranylpyrophosphate to the ultimate product farnesyl pyrophosphate. The sequence is that of Isopentenyl-diphosphate delta-isomerase from Phaffia rhodozyma (Yeast).